Here is a 277-residue protein sequence, read N- to C-terminus: Probable ketoamine kinase HMPREF0351_12196 (277 aa).

84–86 (EWI) provides a ligand contact to ATP. D186 serves as the catalytic Proton acceptor.

Belongs to the fructosamine kinase family.

It carries out the reaction N(6)-(D-ribulosyl)-L-lysine + ATP = N(6)-(3-O-phospho-D-ribulosyl)-L-lysine + ADP + H(+). The catalysed reaction is N-(D-ribulosyl)-cadaverine + ATP = N-(3-O-phospho-D-ribulosyl)-cadaverine + ADP + H(+). The enzyme catalyses N(6)-(D-erythrulosyl)-L-lysine + ATP = N(6)-(3-O-phospho-D-erythrulosyl)-L-lysine + ADP + H(+). It catalyses the reaction N-(D-erythrulosyl)-cadaverine + ATP = N-(3-O-phospho-D-erythrulosyl)-cadaverine + ADP + H(+). It carries out the reaction N(6)-D-ribulosyl-L-lysyl-[protein] + ATP = N(6)-(3-O-phospho-D-ribulosyl)-L-lysyl-[protein] + ADP + H(+). The catalysed reaction is N(6)-(D-erythrulosyl)-L-lysyl-[protein] + ATP = N(6)-(3-O-phospho-D-erythrulosyl)-L-lysyl-[protein] + ADP + H(+). Functionally, ketoamine kinase that phosphorylates ketoamines, such as erythruloselysine, erythrulosecadaverine, ribuloselysine and ribulosecadaverine, on the third carbon of the sugar moiety to generate ketoamine 3-phosphate. Has higher activity on free lysine (erythruloselysine and ribuloselysine), than on ribuloselysine and erythruloselysine residues on glycated proteins. The sequence is that of Probable ketoamine kinase HMPREF0351_12196 from Enterococcus faecium (strain ATCC BAA-472 / TX0016 / DO).